The primary structure comprises 325 residues: Replication factor C small subunit (325 aa).

Residue 47-54 (GPPGTGKT) coordinates ATP.

Belongs to the activator 1 small subunits family. RfcS subfamily. Heteromultimer composed of small subunits (RfcS) and large subunits (RfcL).

Functionally, part of the RFC clamp loader complex which loads the PCNA sliding clamp onto DNA. The chain is Replication factor C small subunit from Aeropyrum pernix (strain ATCC 700893 / DSM 11879 / JCM 9820 / NBRC 100138 / K1).